Here is a 263-residue protein sequence, read N- to C-terminus: Serine protease ami (263 aa).

An N-terminal signal peptide occupies residues 1–21; it reads MNISRVLFAVVLVLTVSTYEC. An N-linked (GlcNAc...) asparagine glycan is attached at N2. Positions 22-26 are cleaved as a propeptide — activation peptide; the sequence is RPRGR. The Peptidase S1 domain occupies 27-254; the sequence is ILGGQDSKEK…YKSWIMETMY (228 aa). A disulfide bridge links C52 with C68. The active-site Charge relay system is H67. 3 N-linked (GlcNAc...) asparagine glycosylation sites follow: N73, N74, and N108. Residue D115 is the Charge relay system of the active site. 3 disulfide bridges follow: C149–C215, C180–C196, and C205–C230. S209 (charge relay system) is an active-site residue. Residue N255 is glycosylated (N-linked (GlcNAc...) asparagine).

The protein belongs to the peptidase S1 family. In the embryo, localizes to paraxial regions at the neurula stage and anterior ventral regions at the tailbud stage. From the late tailbud to tadpole stage, expressed along the forming blood vessels including the anterior cardinal veins, posterior cardinal veins, intersomitic veins, dorsal longitudinal anastomosing vessel, dorsal aorta, pronephric sinus and most prominently around the vascular vitelline network, where expression shows left-right asymmetry in the stage 42 embryo. Localizes to endothelial cells. In adults, shows highest expression in liver with moderate levels of expression in the fat body, lung, gut and vessels. Weakly expressed in adult heart, muscle, testis and ovary.

It is found in the secreted. In terms of biological role, probable serine protease. This Xenopus laevis (African clawed frog) protein is Serine protease ami.